Here is a 359-residue protein sequence, read N- to C-terminus: Peptide chain release factor 1 (359 aa).

N5-methylglutamine is present on glutamine 235.

It belongs to the prokaryotic/mitochondrial release factor family. In terms of processing, methylated by PrmC. Methylation increases the termination efficiency of RF1.

The protein resides in the cytoplasm. In terms of biological role, peptide chain release factor 1 directs the termination of translation in response to the peptide chain termination codons UAG and UAA. In Methylibium petroleiphilum (strain ATCC BAA-1232 / LMG 22953 / PM1), this protein is Peptide chain release factor 1.